A 119-amino-acid polypeptide reads, in one-letter code: MEAKAIARHVRVTPRKARRMVDLIRGKKATEAITILKFAPQDASTPVLKVLQSAIANARVKADKAGEPFRENDLYIKETYVDEGVTLKRFRARAQGRAARINKRTSHITVVVASKEGDR.

It belongs to the universal ribosomal protein uL22 family. In terms of assembly, part of the 50S ribosomal subunit.

Its function is as follows. This protein binds specifically to 23S rRNA; its binding is stimulated by other ribosomal proteins, e.g. L4, L17, and L20. It is important during the early stages of 50S assembly. It makes multiple contacts with different domains of the 23S rRNA in the assembled 50S subunit and ribosome. In terms of biological role, the globular domain of the protein is located near the polypeptide exit tunnel on the outside of the subunit, while an extended beta-hairpin is found that lines the wall of the exit tunnel in the center of the 70S ribosome. The chain is Large ribosomal subunit protein uL22 from Bifidobacterium animalis subsp. lactis (strain AD011).